The chain runs to 185 residues: uncharacterized protein (185 aa).

The Cytoplasmic portion of the chain corresponds to 1-69 (MSSFIDSIKS…SSDCSRAERT (69 aa)). Residues 70 to 90 (FNLILFAIVDLVICCESMAFF) traverse the membrane as a helical segment. A topological domain (extracellular) is located at residue asparagine 91. A helical membrane pass occupies residues 92-112 (LLLKLPSMLLVSFLTMLVFSI). Over 113–118 (SYSWSA) the chain is Cytoplasmic. Residues 119–139 (FNWISFAFSSASFLMKACILF) traverse the membrane as a helical segment. The Extracellular segment spans residues 140–185 (NSSFTWFGVKAVIAEDMLYRMVRGLFCASFVKQLQTTFLATAIVLC).

The protein resides in the membrane. This is an uncharacterized protein from Saccharomyces cerevisiae (strain ATCC 204508 / S288c) (Baker's yeast).